The sequence spans 708 residues: MRSPSRLPHETRDSRQRTPKTDMRGLYQRAIKESFVKLHPKIAVRNPVMFIVWVGTIVTFLVTLNPNLFGTVQANINQQRLLNGLITLILFFTVLFANFAEAVAEGRGKAQADSLKATRSDTIAWKVLPNGSLEKIGSTQLRRGDVIKVVANDMIPGDGEVIQGIGSVDESAITGESAPVLKQPGTDIASSVTGGTRLLSDELIIRITADPGQGFIDRMISLVEGAERSKTPNEIALTVLLAVLTQVFLIVVATMPSFVNYIANFISTAFGAEAANSLRAGASIAILISLLVALIPTTIGGLLSAIGIAGMDRVAQFNVIATSGRAVEACGDINSLVLDKTGTITFGNRMADEFIPVNSYTVEDVARIAKLASLFDETPEGKSIVKLAEKYKILADVNLNQAEGVEFSAKTRMSGTNLPNGKQVRKGAVDAIKGFIRSRGGSIPSDVDVAYERVSLLGGTPLAVCQDNEIFGVIYLKDIVKSGLRERFEQLRRMGVKTIMLTGDNHITASVIAQEAGVDDFIAEATPEDKIDVIRNEQSQGKLVAMTGDGTNDAPALAQANVGLAMNSGTQAAKEAANMVDLDSDPTKLIDLVTIGKQLLITRGALTTFSIANDIAKYFAILPTIFGAAGIGALNIMGLKSAQSAIISALIYNALIIPALIPLALQGVKFRSLTADQLLRRNIFIYGLGGIIAPFIAIKLIDVILPFS.

The disordered stretch occupies residues 1 to 23; sequence MRSPSRLPHETRDSRQRTPKTDM. The segment covering 7–23 has biased composition (basic and acidic residues); the sequence is LPHETRDSRQRTPKTDM. The next 4 membrane-spanning stretches (helical) occupy residues 49–69, 84–104, 235–255, and 283–303; these read MFIV…PNLF, GLIT…EAVA, IALT…VATM, and SIAI…GGLL. Asp339 (4-aspartylphosphate intermediate) is an active-site residue. ATP contacts are provided by residues Asp376, Glu380, 407–414, and Lys426; that span reads FSAKTRMS. 2 residues coordinate Mg(2+): Asp549 and Asp553. A run of 3 helical transmembrane segments spans residues 619-639, 645-665, and 683-703; these read FAIL…IMGL, AIIS…PLAL, and IFIY…LIDV.

This sequence belongs to the cation transport ATPase (P-type) (TC 3.A.3) family. Type IA subfamily. As to quaternary structure, the system is composed of three essential subunits: KdpA, KdpB and KdpC.

The protein resides in the cell inner membrane. It carries out the reaction K(+)(out) + ATP + H2O = K(+)(in) + ADP + phosphate + H(+). In terms of biological role, part of the high-affinity ATP-driven potassium transport (or Kdp) system, which catalyzes the hydrolysis of ATP coupled with the electrogenic transport of potassium into the cytoplasm. This subunit is responsible for energy coupling to the transport system and for the release of the potassium ions to the cytoplasm. The polypeptide is Potassium-transporting ATPase ATP-binding subunit 2 (Nostoc sp. (strain PCC 7120 / SAG 25.82 / UTEX 2576)).